A 382-amino-acid polypeptide reads, in one-letter code: Zinc metalloproteinase nas-7 (382 aa).

The N-terminal stretch at 1–18 (MLLPWIITIVTVIPATLG) is a signal peptide. Residues 19 to 79 (HRNRVQDDEM…DIRLPRRHKR (61 aa)) constitute a propeptide that is removed on maturation. The Peptidase M12A domain occupies 80–273 (NGVSRAAKLW…SKINRMYNCP (194 aa)). 5 disulfides stabilise this stretch: Cys-122–Cys-272, Cys-144–Cys-163, Cys-348–Cys-382, Cys-355–Cys-375, and Cys-362–Cys-379. Residue His-171 coordinates Zn(2+). Glu-172 is a catalytic residue. Zn(2+)-binding residues include His-175 and His-181. One can recognise a ShKT domain in the interval 348–382 (CEDRITVCWWTADRCRSPAIYQVMSSLCPKTCKFC).

Requires Zn(2+) as cofactor. Expressed in the head of adult hermaphrodites but not within pharynx cells. Expressed in pharyngeal muscles, mc cells, intestine, hypodermal seam cells, arcade cells, spermatheca, vulva and rectal epithelial cells.

The protein localises to the secreted. Functionally, metalloprotease. In Caenorhabditis elegans, this protein is Zinc metalloproteinase nas-7 (nas-7).